The following is a 312-amino-acid chain: Homeobox-leucine zipper protein ATHB-5 (312 aa).

Residues 1-33 are disordered; that stretch reads MKRSRGSSDSLSGFLPIRHSTTDKQISPRPTTT. Positions 23–33 are enriched in polar residues; sequence DKQISPRPTTT. The segment at residues 69–128 is a DNA-binding region (homeobox); sequence AAEKKRRLGVEQVKALEKNFEIDNKLEPERKVKLAQELGLQPRQVAIWFQNRRARWKTKQ. Residues 129-164 are leucine-zipper; that stretch reads LERDYGVLKSNFDALKRNRDSLQRDNDSLLGQIKEL.

Belongs to the HD-ZIP homeobox family. Class I subfamily. Interacts with DNA as homodimer. Widely expressed.

The protein localises to the nucleus. Functionally, probable transcription factor that acts as a positive regulator of ABA-responsiveness, mediating the inhibitory effect of ABA on growth during seedling establishment. Binds to the DNA sequence 5'-CAATNATTG-3'. The sequence is that of Homeobox-leucine zipper protein ATHB-5 (ATHB-5) from Arabidopsis thaliana (Mouse-ear cress).